A 231-amino-acid polypeptide reads, in one-letter code: MLLTPTELERLTLYTAAELSRKRRGKGLRLNFPEASALIADEILEGAREGRSVAELIGFGSTILNTDDVMPGVADLLPVLQVEGTFPDGTKLVTVHQPIRPGKLPLAVMPTPGEILSPNSDIQLNNGRPIATLRAINTGDRPVQIGSHYHFFEVNKALDFPRETAFGMHLDIPAGTAVRFEPGELREVQLVQFGGTGDIHGFSGLTNGNLHDPACKRAALERARAQHFKGA.

The urease gamma stretch occupies residues 1–101 (MLLTPTELER…LVTVHQPIRP (101 aa)). The segment at 102–231 (GKLPLAVMPT…RARAQHFKGA (130 aa)) is urease beta.

The protein in the N-terminal section; belongs to the urease gamma subunit family. It in the C-terminal section; belongs to the urease beta subunit family. As to quaternary structure, heterohexamer of 3 UreC (alpha) and 3 UreAB (gamma/beta) subunits.

Its subcellular location is the cytoplasm. It carries out the reaction urea + 2 H2O + H(+) = hydrogencarbonate + 2 NH4(+). It functions in the pathway nitrogen metabolism; urea degradation; CO(2) and NH(3) from urea (urease route): step 1/1. The polypeptide is Urease subunit gamma/beta (Pseudomonas syringae pv. tomato (strain ATCC BAA-871 / DC3000)).